A 363-amino-acid polypeptide reads, in one-letter code: uncharacterized protein (363 aa).

This is an uncharacterized protein from Methanocaldococcus jannaschii (strain ATCC 43067 / DSM 2661 / JAL-1 / JCM 10045 / NBRC 100440) (Methanococcus jannaschii).